A 43-amino-acid polypeptide reads, in one-letter code: Protein PsbN (43 aa).

The chain crosses the membrane as a helical span at residues 5–27 (TLVAISISGSLVSFTGYALYTAF).

It belongs to the PsbN family.

The protein resides in the plastid. Its subcellular location is the chloroplast thylakoid membrane. May play a role in photosystem I and II biogenesis. The chain is Protein PsbN from Lactoris fernandeziana.